The primary structure comprises 179 residues: Enhancer of split m8 protein (179 aa).

The region spanning Tyr-10–Gln-65 is the bHLH domain. The 34-residue stretch at Phe-83–Leu-116 folds into the Orange domain. Residues Asp-146–Trp-179 are disordered. The short motif at Trp-176–Trp-179 is the WRPW motif element.

As to quaternary structure, homodimer. Heterodimers with dpn. Transcription repression requires formation of a complex with a corepressor protein (Groucho).

It localises to the nucleus. Its function is as follows. Participates in the control of cell fate choice by uncommitted neuroectodermal cells in the embryo. Transcriptional repressor. Binds DNA on N-box motifs: 5'-CACNAG-3'. Part of the Notch signaling pathway. This chain is Enhancer of split m8 protein, found in Drosophila melanogaster (Fruit fly).